Consider the following 245-residue polypeptide: tRNA (guanine-N(1)-)-methyltransferase (245 aa).

Residues glycine 114 and 133–138 (IGDYVL) contribute to the S-adenosyl-L-methionine site.

Belongs to the RNA methyltransferase TrmD family. As to quaternary structure, homodimer.

The protein localises to the cytoplasm. It catalyses the reaction guanosine(37) in tRNA + S-adenosyl-L-methionine = N(1)-methylguanosine(37) in tRNA + S-adenosyl-L-homocysteine + H(+). Functionally, specifically methylates guanosine-37 in various tRNAs. This Prochlorococcus marinus (strain MIT 9312) protein is tRNA (guanine-N(1)-)-methyltransferase.